The following is a 20-amino-acid chain: 21 kDa cold shock-induced protein (20 aa).

Positions 1 to 12 are enriched in basic and acidic residues; it reads TDSIKETIKETV. The interval 1–20 is disordered; it reads TDSIKETIKETVNHQAEWPY.

In Streptococcus thermophilus, this protein is 21 kDa cold shock-induced protein.